The chain runs to 662 residues: MNNFSIISAYKPAGGQPKAIDEIIAGLNSKKRSQMLLGITGSGKTFTMANIIERTNRPTLIMAHNKTLAAQIYLEMKSIFPKNAVEYFVSYYDYYQPEAYIVRTDTFIEKDSSINEQIDLMRHSATRSLLERRDVIVIASVSCIYGLGAPDLYYQMTVHLELGQSYPRDKLLNDLINLQYKRNDIGFERGCFRVKGDHIDIFPSHYSDKAWRLSFFGNELEYIHEFDPLTGEKLTQLDKAMVFGNSHFVMPQKTINNAISSIEVELQKHLDVLKSQDKLIEAKRLNQRTQYDLEMLTETGSCKGIENYSRFFTGRNAGEPPPTLFEYLPKDALLFLDESHVSIPQIRAMYNSDRARKEVLVEHGFRLPSALDNRPLKFEEWEKFRPQTVFVSATPGPFELEETGGTVVELIIRPTGLLDPECIIKPATNQVEDLISEIQTTITKGLRILVTTLTKKMAEDLTSYLQDLQYKTYYLHSNIHTLERIEILRDLRQGNIDILVGINLLREGIDIPECGLVAILDADKEGFLRSEVSLIQTIGRAARNSRGKVILYADKMTKSIDKAVSETLRRRQIQQEYNKKYGIIPKTINSAIHTLESLEEIHDNKLDKKQTNTLLNNPAKLKSYMDKLKKEMFKAASNLEFEQAAKLRNQLKTLEKAVLELS.

The Helicase ATP-binding domain maps to 25–414; that stretch reads AGLNSKKRSQ…GTVVELIIRP (390 aa). 38 to 45 serves as a coordination point for ATP; that stretch reads GITGSGKT. Residues 91-114 carry the Beta-hairpin motif; it reads YYDYYQPEAYIVRTDTFIEKDSSI. One can recognise a Helicase C-terminal domain in the interval 430–592; sequence QVEDLISEIQ…IIPKTINSAI (163 aa). In terms of domain architecture, UVR spans 622 to 657; that stretch reads KSYMDKLKKEMFKAASNLEFEQAAKLRNQLKTLEKA.

Belongs to the UvrB family. In terms of assembly, forms a heterotetramer with UvrA during the search for lesions. Interacts with UvrC in an incision complex.

It localises to the cytoplasm. In terms of biological role, the UvrABC repair system catalyzes the recognition and processing of DNA lesions. A damage recognition complex composed of 2 UvrA and 2 UvrB subunits scans DNA for abnormalities. Upon binding of the UvrA(2)B(2) complex to a putative damaged site, the DNA wraps around one UvrB monomer. DNA wrap is dependent on ATP binding by UvrB and probably causes local melting of the DNA helix, facilitating insertion of UvrB beta-hairpin between the DNA strands. Then UvrB probes one DNA strand for the presence of a lesion. If a lesion is found the UvrA subunits dissociate and the UvrB-DNA preincision complex is formed. This complex is subsequently bound by UvrC and the second UvrB is released. If no lesion is found, the DNA wraps around the other UvrB subunit that will check the other stand for damage. The protein is UvrABC system protein B of Rickettsia typhi (strain ATCC VR-144 / Wilmington).